We begin with the raw amino-acid sequence, 213 residues long: RxLR effector protein PexRD1 (213 aa).

The signal sequence occupies residues 1 to 19 (MRACNTLLPTAIVLTSCDA). Residues 50–77 (RQLRGFYATENTDPVNNQDTAHEDGEER) carry the RxLR-dEER motif.

This sequence belongs to the RxLR effector family.

The protein resides in the secreted. It localises to the host nucleus. Functionally, effector that enhances P.infestans colonization of Nicotiana benthamiana leaves. The protein is RxLR effector protein PexRD1 of Phytophthora infestans (strain T30-4) (Potato late blight agent).